Consider the following 356-residue polypeptide: Heparan sulfate 2-O-sulfotransferase 1 (356 aa).

Topologically, residues 1–11 (MGLLRIMMPPK) are cytoplasmic. A helical; Signal-anchor for type II membrane protein membrane pass occupies residues 12–28 (LQLLAVVAFAVAMLFLE). A coiled-coil region spans residues 24 to 51 (MLFLENQIQKLEESRAKLERAIARHEVR). The Lumenal portion of the chain corresponds to 29–356 (NQIQKLEESR…FYEKIYPKSN (328 aa)). Adenosine 3',5'-bisphosphate contacts are provided by K83, T84, A85, S86, T87, and S88. N-linked (GlcNAc...) asparagine glycosylation is found at N108 and N127. Residues H140 and H142 contribute to the active site. Residues R164 and S172 each contribute to the adenosine 3',5'-bisphosphate site. Intrachain disulfides connect C201/C209 and C222/C228. 4 residues coordinate adenosine 3',5'-bisphosphate: Y279, S285, T290, and K293.

This sequence belongs to the sulfotransferase 3 family. As to quaternary structure, homotrimer. Interacts with the C5-epimerase GLCE. In terms of processing, N-glycosylated. In terms of tissue distribution, widely expressed. Expressed at higher level in lung and brain. Weakly expressed in spleen.

It is found in the golgi apparatus membrane. Its function is as follows. Catalyzes the transfer of a sulfo group from 3'-phospho-5'-adenylyl sulfate (PAPS) to the 2-OH position of iduronic acid (IdoA) or glucuronic acid (GlcA) within the heparan sulfate (HS) chain and participates in HS biosynthesis. Required for metanephric development of kidney formation, suggesting that 2-O-sulfation within HS is essential for signaling between ureteric bud and metanephric mesenchyme. The chain is Heparan sulfate 2-O-sulfotransferase 1 from Mus musculus (Mouse).